A 162-amino-acid polypeptide reads, in one-letter code: Caveolin-2 (162 aa).

Over 1 to 86 (MGLETEKADV…FEMSKYVIYK (86 aa)) the chain is Cytoplasmic. At Tyr19 the chain carries Phosphotyrosine; by SRC. Residues Ser20 and Ser23 each carry the phosphoserine modification. Tyr27 is modified (phosphotyrosine; by SRC). The helical intramembrane region spans 87-107 (FLTVFLAIPLAFAAGILFATL). At 108-162 (SCLHIWIIMPFVKTCLMVLPSVQTIWKSVTDVVIAPLCTSIGRSFSSVSLQLSHD) the chain is on the cytoplasmic side.

The protein belongs to the caveolin family. In terms of assembly, monomer or homodimer. Interacts with CAV1; the interaction forms a stable heterooligomeric complex that is required for targeting to lipid rafts and for caveolae formation. Tyrosine phosphorylated forms do not form heterooligomers with the Tyr-19-phosphorylated form existing as a monomer or dimer, and the Tyr-27-form as a monomer only. Interacts (tyrosine phosphorylated form) with the SH2 domain-containing proteins, RASA1, NCK1 and SRC. Interacts (tyrosine phosphorylated form) with INSR, the interaction (Tyr-27-phosphorylated form) is increased on insulin stimulation. Interacts (Tyr-19 phosphorylated form) with MAPK1 (phosphorylated form); the interaction, promoted by insulin, leads to nuclear location and MAPK1 activation. Interacts with STAT3; the interaction is increased on insulin-induced tyrosine phosphorylation leading to STAT activation. In terms of processing, phosphorylated on serine and tyrosine residues. CAV1 promotes phosphorylation on Ser-23 which then targets the complex to the plasma membrane, lipid rafts and caveolae. Phosphorylation on both Tyr-19 and Tyr-27 is required for insulin-induced 'Ser-727' phosphorylation of STAT3 and its activation. Phosphorylation on Tyr-19 is required for insulin-induced phosphorylation of MAPK1 and DNA binding of STAT3. Tyrosine phosphorylation is induced by both EGF and insulin. As to expression, expressed in aortic endothelial cells.

The protein localises to the nucleus. It is found in the cytoplasm. The protein resides in the golgi apparatus membrane. It localises to the cell membrane. Its subcellular location is the membrane. The protein localises to the caveola. Functionally, may act as a scaffolding protein within caveolar membranes. Interacts directly with G-protein alpha subunits and can functionally regulate their activity. Acts as an accessory protein in conjunction with CAV1 in targeting to lipid rafts and driving caveolae formation. Positive regulator of cellular mitogenesis of the MAPK signaling pathway. Required for the insulin-stimulated nuclear translocation and activation of MAPK1 and STAT3, and the subsequent regulation of cell cycle progression. The protein is Caveolin-2 (CAV2) of Bos taurus (Bovine).